The primary structure comprises 298 residues: Rhodomycin D methylesterase DnrP (298 aa).

Residues 25 to 277 form the AB hydrolase-1 domain; it reads PLLLIAGGNL…VEIENMGHAL (253 aa).

This sequence belongs to the methyl esterase DnrP family.

It carries out the reaction rhodomycin D + H2O = 10-carboxy-13-deoxycarminomycin + methanol + H(+). The enzyme catalyses 4-O-methylrhodomycin D + H2O = 10-carboxy-13-deoxydaunorubicin + methanol + H(+). The protein operates within antibiotic biosynthesis; daunorubicin biosynthesis. Its pathway is antibiotic biosynthesis; carminomycin biosynthesis. Functionally, involved in the biosynthesis of the anthracyclines carminomycin and daunorubicin (daunomycin) which are aromatic polyketide antibiotics that exhibit high cytotoxicity and are widely applied in the chemotherapy of a variety of cancers. Catalyzes the removal of methyl group from the carbomethoxy group of rhodomycin D (10-carbomethoxy-13-deoxycarminomycin) and 4-O-methylrhodomycin D to yield 10-carboxy-13-deoxycarminomycin and 10-carboxy-13-deoxydaunorubicin, respectively. Could be also involved in the decarboxylation of 10-carboxy-13-deoxycarminomycin and 10-carboxy-13-deoxydaunorubicin to yield 13-deoxycarminomycin and 13-deoxydaunorubicin, respectively. It seems that DnrK may influence the ability of DnrP to carry out the decarboxylation. In Streptomyces peucetius, this protein is Rhodomycin D methylesterase DnrP (dnrP).